An 82-amino-acid polypeptide reads, in one-letter code: Photosystem I iron-sulfur center (82 aa).

4Fe-4S ferredoxin-type domains are found at residues 2-31 and 40-69; these read AHSVKIYDTCIGCTQCVRACPTDVLEMVPW and IAAAPRTEDCVGCKRCETACPTDFLSIRVY. Cys11, Cys14, Cys17, Cys21, Cys49, Cys52, Cys55, and Cys59 together coordinate [4Fe-4S] cluster.

As to quaternary structure, the cyanobacterial PSI reaction center is composed of one copy each of PsaA,B,C,D,E,F,I,J,K,L,M and X, and forms trimeric complexes. The cofactor is [4Fe-4S] cluster.

It localises to the cellular thylakoid membrane. It carries out the reaction reduced [plastocyanin] + hnu + oxidized [2Fe-2S]-[ferredoxin] = oxidized [plastocyanin] + reduced [2Fe-2S]-[ferredoxin]. Apoprotein for the two 4Fe-4S centers FA and FB of photosystem I (PSI); essential for photochemical activity. FB is the terminal electron acceptor of PSI, donating electrons to ferredoxin. The C-terminus interacts with PsaA/B/D and helps assemble the protein into the PSI complex. Required for binding of PsaD and PsaE to PSI. PSI is a plastocyanin/cytochrome c6-ferredoxin oxidoreductase, converting photonic excitation into a charge separation, which transfers an electron from the donor P700 chlorophyll pair to the spectroscopically characterized acceptors A0, A1, FX, FA and FB in turn. This Synechococcus sp. (strain JA-2-3B'a(2-13)) (Cyanobacteria bacterium Yellowstone B-Prime) protein is Photosystem I iron-sulfur center.